Reading from the N-terminus, the 640-residue chain is Threonine--tRNA ligase (640 aa).

The 61-residue stretch at 1–61 (MLVVTLPDGS…DKDSQLAIIT (61 aa)) folds into the TGS domain. The catalytic stretch occupies residues 242–533 (DHRRLGKQLD…LIENHTGNMP (292 aa)). The Zn(2+) site is built by Cys-333, His-384, and His-510.

Belongs to the class-II aminoacyl-tRNA synthetase family. Homodimer. Requires Zn(2+) as cofactor.

It localises to the cytoplasm. It catalyses the reaction tRNA(Thr) + L-threonine + ATP = L-threonyl-tRNA(Thr) + AMP + diphosphate + H(+). In terms of biological role, catalyzes the attachment of threonine to tRNA(Thr) in a two-step reaction: L-threonine is first activated by ATP to form Thr-AMP and then transferred to the acceptor end of tRNA(Thr). Also edits incorrectly charged L-seryl-tRNA(Thr). The protein is Threonine--tRNA ligase of Polynucleobacter necessarius subsp. necessarius (strain STIR1).